The following is a 250-amino-acid chain: Cell division protein ZapD (250 aa).

Belongs to the ZapD family. As to quaternary structure, interacts with FtsZ.

It is found in the cytoplasm. In terms of biological role, cell division factor that enhances FtsZ-ring assembly. Directly interacts with FtsZ and promotes bundling of FtsZ protofilaments, with a reduction in FtsZ GTPase activity. This is Cell division protein ZapD from Yersinia pestis bv. Antiqua (strain Antiqua).